The chain runs to 414 residues: Calcium/calmodulin-dependent protein kinase cmkA (414 aa).

A Protein kinase domain is found at 23–278 (YRFGRTLGAG…SEEALKHPWL (256 aa)). Residues 29 to 37 (LGAGTYGIV) and Lys-50 contribute to the ATP site. Asp-142 (proton acceptor) is an active-site residue. The autoinhibitory domain stretch occupies residues 278-314 (LKGESASDRDLLPEIRAYIARSRLKRGIEIIKLANRI). The segment at 293–315 (RAYIARSRLKRGIEIIKLANRIE) is calmodulin-binding. 2 disordered regions span residues 320 to 375 (QEED…KRSL) and 394 to 414 (EMKE…RAHS). Residues 351-364 (STENSNTHPASTGN) are compositionally biased toward polar residues.

The protein belongs to the protein kinase superfamily. CAMK Ser/Thr protein kinase family. CaMK subfamily. As to quaternary structure, monomer. Post-translationally, autophosphorylated in a calcium/calmodulin-dependent manner.

The enzyme catalyses L-seryl-[protein] + ATP = O-phospho-L-seryl-[protein] + ADP + H(+). It carries out the reaction L-threonyl-[protein] + ATP = O-phospho-L-threonyl-[protein] + ADP + H(+). Its activity is regulated as follows. Activated by Ca(2+)/calmodulin. Binding of calmodulin may relieve intrasteric autoinhibition. In terms of biological role, calcium/calmodulin-dependent protein kinase. Required in nuclear division cycle for progression from G2 to mitosis. Required for hyphal growth. In Emericella nidulans (strain FGSC A4 / ATCC 38163 / CBS 112.46 / NRRL 194 / M139) (Aspergillus nidulans), this protein is Calcium/calmodulin-dependent protein kinase cmkA (cmkA).